Consider the following 558-residue polypeptide: DNA ligase B (558 aa).

Residue K124 is the N6-AMP-lysine intermediate of the active site.

The protein belongs to the NAD-dependent DNA ligase family. LigB subfamily.

The enzyme catalyses NAD(+) + (deoxyribonucleotide)n-3'-hydroxyl + 5'-phospho-(deoxyribonucleotide)m = (deoxyribonucleotide)n+m + AMP + beta-nicotinamide D-nucleotide.. Catalyzes the formation of phosphodiester linkages between 5'-phosphoryl and 3'-hydroxyl groups in double-stranded DNA using NAD as a coenzyme and as the energy source for the reaction. The chain is DNA ligase B from Klebsiella pneumoniae (strain 342).